We begin with the raw amino-acid sequence, 426 residues long: Serine--tRNA ligase (426 aa).

233-235 (TAE) serves as a coordination point for L-serine. 264 to 266 (RSE) contacts ATP. E287 serves as a coordination point for L-serine. ATP is bound at residue 351-354 (EISS). S387 contributes to the L-serine binding site.

Belongs to the class-II aminoacyl-tRNA synthetase family. Type-1 seryl-tRNA synthetase subfamily. As to quaternary structure, homodimer. The tRNA molecule binds across the dimer.

It is found in the cytoplasm. The enzyme catalyses tRNA(Ser) + L-serine + ATP = L-seryl-tRNA(Ser) + AMP + diphosphate + H(+). The catalysed reaction is tRNA(Sec) + L-serine + ATP = L-seryl-tRNA(Sec) + AMP + diphosphate + H(+). Its pathway is aminoacyl-tRNA biosynthesis; selenocysteinyl-tRNA(Sec) biosynthesis; L-seryl-tRNA(Sec) from L-serine and tRNA(Sec): step 1/1. Catalyzes the attachment of serine to tRNA(Ser). Is also able to aminoacylate tRNA(Sec) with serine, to form the misacylated tRNA L-seryl-tRNA(Sec), which will be further converted into selenocysteinyl-tRNA(Sec). This Pseudomonas syringae pv. tomato (strain ATCC BAA-871 / DC3000) protein is Serine--tRNA ligase.